The chain runs to 132 residues: Phosphoribosyl-AMP cyclohydrolase (132 aa).

Position 81 (D81) interacts with Mg(2+). Residue C82 coordinates Zn(2+). Mg(2+) is bound by residues D83 and D85. Residues C99 and C106 each coordinate Zn(2+).

The protein belongs to the PRA-CH family. As to quaternary structure, homodimer. Requires Mg(2+) as cofactor. Zn(2+) is required as a cofactor.

The protein localises to the cytoplasm. It catalyses the reaction 1-(5-phospho-beta-D-ribosyl)-5'-AMP + H2O = 1-(5-phospho-beta-D-ribosyl)-5-[(5-phospho-beta-D-ribosylamino)methylideneamino]imidazole-4-carboxamide. The protein operates within amino-acid biosynthesis; L-histidine biosynthesis; L-histidine from 5-phospho-alpha-D-ribose 1-diphosphate: step 3/9. In terms of biological role, catalyzes the hydrolysis of the adenine ring of phosphoribosyl-AMP. The chain is Phosphoribosyl-AMP cyclohydrolase from Chromobacterium violaceum (strain ATCC 12472 / DSM 30191 / JCM 1249 / CCUG 213 / NBRC 12614 / NCIMB 9131 / NCTC 9757 / MK).